The chain runs to 444 residues: Aflatoxin biosynthesis regulatory protein (444 aa).

Residues 1-26 (MVDHISPRASPGPIRSSQTRRARKLR) form a disordered region. The segment at residues 29–56 (CTSCASSKVRCTKEKPACARCIERGLAC) is a DNA-binding region (zn(2)-C6 fungal-type). Positions 64–167 (MGRNPRAPSP…QGLGGDLAGQ (104 aa)) are disordered. Residues 106–116 (TQAHTHAHSHP) are compositionally biased toward basic residues. Residues 120-130 (PQSHPQSNQPP) are compositionally biased toward low complexity. The segment covering 136-149 (PNGSSSVSAIFSHQ) has biased composition (polar residues).

Its subcellular location is the nucleus. It participates in mycotoxin biosynthesis; aflatoxin biosynthesis. Involved in the regulation of aflatoxin biosynthesis. May have a role in nitrate assimilation and sclerotial morphogenesis. This Aspergillus parasiticus protein is Aflatoxin biosynthesis regulatory protein (aflR).